The primary structure comprises 394 residues: Dual-specificity RNA methyltransferase RlmN (394 aa).

Glutamate 116 (proton acceptor) is an active-site residue. In terms of domain architecture, Radical SAM core spans 122–365 (EEDRGTLCVS…SPIRTPRGED (244 aa)). An intrachain disulfide couples cysteine 129 to cysteine 370. The [4Fe-4S] cluster site is built by cysteine 136, cysteine 140, and cysteine 143. S-adenosyl-L-methionine contacts are provided by residues 196 to 197 (GE), serine 228, 250 to 252 (SFH), and asparagine 327. Cysteine 370 serves as the catalytic S-methylcysteine intermediate.

It belongs to the radical SAM superfamily. RlmN family. The cofactor is [4Fe-4S] cluster.

The protein resides in the cytoplasm. It carries out the reaction adenosine(2503) in 23S rRNA + 2 reduced [2Fe-2S]-[ferredoxin] + 2 S-adenosyl-L-methionine = 2-methyladenosine(2503) in 23S rRNA + 5'-deoxyadenosine + L-methionine + 2 oxidized [2Fe-2S]-[ferredoxin] + S-adenosyl-L-homocysteine. The enzyme catalyses adenosine(37) in tRNA + 2 reduced [2Fe-2S]-[ferredoxin] + 2 S-adenosyl-L-methionine = 2-methyladenosine(37) in tRNA + 5'-deoxyadenosine + L-methionine + 2 oxidized [2Fe-2S]-[ferredoxin] + S-adenosyl-L-homocysteine. Specifically methylates position 2 of adenine 2503 in 23S rRNA and position 2 of adenine 37 in tRNAs. m2A2503 modification seems to play a crucial role in the proofreading step occurring at the peptidyl transferase center and thus would serve to optimize ribosomal fidelity. The protein is Dual-specificity RNA methyltransferase RlmN of Dinoroseobacter shibae (strain DSM 16493 / NCIMB 14021 / DFL 12).